A 1138-amino-acid chain; its full sequence is Serine/threonine/tyrosine-interacting-like protein 2 (1138 aa).

The interval 1-20 (MATGGDAEEEQVVPNEEDEA) is disordered. The 149-residue stretch at 132-280 (NEVDEVWPNV…LRELNEKLME (149 aa)) folds into the Tyrosine-protein phosphatase domain. Phosphoserine is present on Ser291. Disordered stretches follow at residues 309 to 336 (EEED…VTLI), 348 to 473 (EWRK…TWDM), 486 to 515 (ARKY…DDEE), 552 to 575 (KKDS…GEKN), 592 to 618 (QKKV…AKKR), 660 to 694 (AAPS…LPNL), 761 to 800 (SGCL…VRGT), and 850 to 1117 (FKKK…DEAI). A compositionally biased stretch (polar residues) spans 316 to 331 (SHLSGSSLGKASQVSK). Residue Ser373 is modified to Phosphoserine. A compositionally biased stretch (acidic residues) spans 376–385 (DGDDCEDEDV). The span at 386–409 (ERIIQEWQSRNERYQAKGREQWNR) shows a compositional bias: basic and acidic residues. Thr427 is modified (phosphothreonine). A phosphoserine mark is found at Ser503 and Ser555. Basic and acidic residues-rich tracts occupy residues 552-567 (KKDS…HGTE) and 595-614 (VGSE…DTVL). The segment covering 672-687 (SVLSTQSHRSHASNMP) has biased composition (polar residues). Residues 773 to 788 (SSDVQSVLSSTSSLTS) show a composition bias toward low complexity. A compositionally biased stretch (acidic residues) spans 858-871 (DEDMSVGDRDEDTD). Phosphoserine is present on Ser862. Over residues 878–897 (RYSSRSNSQKPETDASSSLA) the composition is skewed to polar residues. Residue Ser929 is modified to Phosphoserine. Residues 936-947 (SGSSRGRYTRSS) show a composition bias toward low complexity. Positions 965–977 (RSQEQDTSFHEAN) are enriched in basic and acidic residues. Phosphoserine is present on Ser966. Residues 980–992 (TVRNTSRFSSSTT) show a composition bias toward polar residues. Ser1016 bears the Phosphoserine mark. Basic and acidic residues-rich tracts occupy residues 1035–1059 (PEPR…KSDF) and 1074–1091 (RSEE…EEGR). Residues 1095 to 1106 (GRQSQYRRSTNQ) are compositionally biased toward polar residues. The segment covering 1107-1116 (QEEEEMDDEA) has biased composition (acidic residues).

It belongs to the protein-tyrosine phosphatase family. Non-receptor class dual specificity subfamily.

The protein localises to the cytoplasm. It localises to the myofibril. The protein resides in the sarcomere. Functionally, may be required for myofiber maturation. The polypeptide is Serine/threonine/tyrosine-interacting-like protein 2 (Styxl2) (Mus musculus (Mouse)).